A 262-amino-acid polypeptide reads, in one-letter code: Cytochrome c oxidase subunit 3 (262 aa).

Helical transmembrane passes span 16-36 (PWPY…VVYF), 39-59 (SQTW…IVWW), 83-103 (GMLL…WAFF), 128-148 (FSVP…VTWA), 160-180 (AING…LQAM), 198-218 (FFVA…FLAV), and 241-261 (WYWH…YWWG).

This sequence belongs to the cytochrome c oxidase subunit 3 family. Component of the cytochrome c oxidase (complex IV, CIV), a multisubunit enzyme composed of a catalytic core of 3 subunits and several supernumerary subunits. The complex exists as a monomer or a dimer and forms supercomplexes (SCs) in the inner mitochondrial membrane with ubiquinol-cytochrome c oxidoreductase (cytochrome b-c1 complex, complex III, CIII).

The protein resides in the mitochondrion inner membrane. The enzyme catalyses 4 Fe(II)-[cytochrome c] + O2 + 8 H(+)(in) = 4 Fe(III)-[cytochrome c] + 2 H2O + 4 H(+)(out). In terms of biological role, component of the cytochrome c oxidase, the last enzyme in the mitochondrial electron transport chain which drives oxidative phosphorylation. The respiratory chain contains 3 multisubunit complexes succinate dehydrogenase (complex II, CII), ubiquinol-cytochrome c oxidoreductase (cytochrome b-c1 complex, complex III, CIII) and cytochrome c oxidase (complex IV, CIV), that cooperate to transfer electrons derived from NADH and succinate to molecular oxygen, creating an electrochemical gradient over the inner membrane that drives transmembrane transport and the ATP synthase. Cytochrome c oxidase is the component of the respiratory chain that catalyzes the reduction of oxygen to water. Electrons originating from reduced cytochrome c in the intermembrane space (IMS) are transferred via the dinuclear copper A center (CU(A)) of subunit 2 and heme A of subunit 1 to the active site in subunit 1, a binuclear center (BNC) formed by heme A3 and copper B (CU(B)). The BNC reduces molecular oxygen to 2 water molecules using 4 electrons from cytochrome c in the IMS and 4 protons from the mitochondrial matrix. The chain is Cytochrome c oxidase subunit 3 (COIII) from Metridium senile (Brown sea anemone).